The chain runs to 195 residues: Apoptosis-associated speck-like protein containing a CARD (195 aa).

One can recognise a Pyrin domain in the interval 1–91 (MGCTRDAILD…AEQLQETMSK (91 aa)). Glycyl lysine isopeptide (Lys-Gly) (interchain with G-Cter in ubiquitin) cross-links involve residues Lys55 and Lys174. The CARD domain occupies 107 to 195 (TAKPGLHFVD…PYLVDDLEQS (89 aa)). A Phosphoserine modification is found at Ser195.

As to quaternary structure, self-associates; enforced oligomerization induces apoptosis, NF-kappa-B regulation and interleukin-1 beta secretion. Homooligomers can form disk-like particles of approximately 12 nm diameter and approximately 1 nm height. Component of several inflammasomes containing one pattern recognition receptor/sensor, such as NLRP1, NLRP2, NLRP3, NLRP6, NLRC4, AIM2, MEFV or NOD2, and probably NLRC4 or NLRP12. Major component of the ASC pyroptosome, a 1-2 um supramolecular assembly (one per macrophage cell) which consists of oligomerized PYCARD dimers and CASP1. Interacts with CASP1 (precursor form); the interaction induces activation of CASP1 leading to the processing of interleukin-1 beta; PYCARD competes with RIPK2 for binding to CASP1. Interacts with NLRP3; the interaction requires the homooligomerization of NLRP3. Interacts with NLRP2, NLRC4, MEFV, CARD16, AIM2, NOD2, RIGI, RIPK2, PYDC1, PYDC2, NLRP10, CASP8, CHUK, IKBKB and BAX. Component of the AIM2 PANoptosome complex, a multiprotein complex that drives inflammatory cell death (PANoptosis). Phosphorylated. Post-translationally, 'Lys-63'-linked polyubiquitination by TRAF3 is critical for speck formation and inflammasome activation. 'Lys-63'-linked deubiquitinated by USP50; a crucial step for NLRP3-mediated inflammasome activation. 'Lys-63'-linked polyubiquitination by PELI1 is also critical for speck formation and inflammasome activation. Deubiquitinated by USP3 that cleaves 'Lys-48'-linked ubiquitin chains and strengthens its stability by blocking proteasomal degradation.

The protein resides in the cytoplasm. The protein localises to the inflammasome. It is found in the endoplasmic reticulum. It localises to the mitochondrion. Its subcellular location is the nucleus. Its function is as follows. Functions as a key mediator in apoptosis and inflammation. Promotes caspase-mediated apoptosis involving predominantly caspase-8 and also caspase-9 in a probable cell type-specific manner. Involved in activation of the mitochondrial apoptotic pathway, promotes caspase-8-dependent proteolytic maturation of BID independently of FADD in certain cell types and also mediates mitochondrial translocation of BAX and activates BAX-dependent apoptosis coupled to activation of caspase-9, -2 and -3. Involved in innate immune response by acting as an integral adapter in the assembly of various inflammasomes (NLRP2, NLRP3, NLRP6 and AIM2) which recruit and activate caspase-1 leading to processing and secretion of pro-inflammatory cytokines. Caspase-1-dependent inflammation leads to macrophage pyroptosis, a form of cell death. The function as activating adapter in different types of inflammasomes is mediated by the pyrin and CARD domains and their homotypic interactions. Clustered PYCARD nucleates the formation of caspase-1 filaments through the interaction of their respective CARD domains, acting as a platform for of caspase-1 polymerization. In the NLRC4 inflammasomes seems not be required but facilitates the processing of procaspase-1. In cooperation with NOD2 involved in an inflammasome activated by bacterial muramyl dipeptide leading to caspase-1 activation. May be involved in RIGI-triggered pro-inflammatory responses and inflammasome activation. In collaboration with AIM2 which detects cytosolic double-stranded DNA may also be involved in a caspase-1-independent cell death that involves caspase-8. In adaptive immunity may be involved in maturation of dendritic cells to stimulate T-cell immunity and in cytoskeletal rearrangements coupled to chemotaxis and antigen uptake may be involved in post-transcriptional regulation of the guanine nucleotide exchange factor DOCK2; the latter function is proposed to involve the nuclear form. Also involved in transcriptional activation of cytokines and chemokines independent of the inflammasome; this function may involve AP-1, NF-kappa-B, MAPK and caspase-8 signaling pathways. For regulation of NF-kappa-B activating and inhibiting functions have been reported. Modulates NF-kappa-B induction at the level of the IKK complex by inhibiting kinase activity of CHUK and IKBK. Proposed to compete with RIPK2 for association with CASP1 thereby down-regulating CASP1-mediated RIPK2-dependent NF-kappa-B activation and activating interleukin-1 beta processing. Modulates host resistance to DNA virus infection, probably by inducing the cleavage of and inactivating CGAS in presence of cytoplasmic double-stranded DNA. The sequence is that of Apoptosis-associated speck-like protein containing a CARD (PYCARD) from Bos taurus (Bovine).